Consider the following 4485-residue polypeptide: MALDNRHRLIVGKLAEAFGLPENVIEKTLTQDKQAVNSFFTPAGPPSLVFVYQVKEDKLKDGSVGPVDNKPTLHRIGPHERIHNSVYFTRLNPKGINEKTLEADMGSGELSVLWALENFKAIVSDLYLPIMQEQQQWGKMSTEYLEDFLSSTAKFGSMLTEAVATVSGGVEPMPDPRYIDQYGDLRPAGITQAAGDDDTLQEMEECLTEWCREAELLLNQTNKIKDGEERGPDTELEYWRTRMSNFNSITEHLKTKECKLVLGICSHAKTKAYLRWRGLDVQITDAANESKDNVKYLATLEKSMEPMYQGRVTDITESLPALMTNVRMMYTIARFYSTAEHMTRLFTKITNQLVRRCKEQIMENGKIWDQDKVTLIGNMKVSVELANVYRQQYRLAKETLAAQPKSKQFDFDEQAIFLKFDLSSKALHKLIDMFTTIHQFSSLEQHTHIEGLDTMLKSLNNIIDDVKRKPYDLLDYSRNAFDTDFLEFNVQINDLELQLQGFVNASFEHITSTEHALSLLAQFQAIMQRETLQQDLENKYMVIFQNYAKDLDAVQKLYEKNKYEPPVPRNAPPVAGNIMWARQLLRRIEAPMQLAQNKNLLAAKESKKNIKTYNKVAKALIEFETLWHQAWIKSIEQCKAGLAAPLLVQHPDTGKILVNFDKEIMQLVREAKYMQRFNIRCSSPSQMVLLQEEKFKFYHNQLTHLVREYEHVLGRGATIKPLLRPHLDDMERKIAPGFAVLTWTSLNIDGYLHRFKQGLARLEELVRKVVDLTENRVDSNLGAISSTLLVELPTDRSFTYEGFVEQNRFQKKQAELLAIRNEEVRRAIEDLYTLVRNYPRENTEDVLDEKEVSLLVRHYSKNMYNAIMQCTLNSLQAMKRRLGSKTTTGIFFMERPFFDVDVELKVPSVCMNPTLEEIQAAINQCAKKVLTISKQLPAWGMDNVATYHEMMRGDRRWVKAVLRLTGSVEGIKTQVGEYIRTFDKYDFLWKEDLQAAYDHFMRSNPTLEAFEAELKKYMAIETEVTMINGVNNIGALSLETHPLKNSLKAEAVSWKTQFAQNLHKQCSDDLKLDNYIRDTNSKFHRKIEDLEDVRNVMAVLKEVREKESEIDNLIGPIEEMYGLLMRYEVRVPKEETTMVSDLRYGWKKLKKVATEVSDNLTRLQVGFKRELIKEVKTFVVDAQMFRKDWEANAMVPGLDPQEAVDRLRKFQQMFEVRKRKWENYSSGEELFGLPVTQYPELEQTEKEIQMLDRLYSLYVAVITTIKGYGDYFWVDVVEKIDEMGEQVQQYQNQSKKLPKLRDWPAYNACRKTIDDFLEMLPLFQALTHKSMRERHWKEVMRVTGHELNLAEDHFKLQHLLDCNVLRYREDIEDLTGAAVKEEIIEVKLNQLKADWATANLALAEYKNRGPVILKPSDTSELMEKLEESQMTLGSMATNRYSAPFRDEVQAWSIKLSTVSEIIEQWLMVQSMWQYMEAVFSGGDIVKQLPQEAKRFLNIDKNFMKIVSNALETQNVINTCFGNELMKNMLPHLHEQLEMCQKSLSAYLEQKRAEFPRFTCVGPHLLEICRWAHDPPSVVPHFQSGLFDSLSNVTFDRIDKTRMTEMFSQQNEKVEFERPVDAKGNIEVWLQRLVDGMEDTVKQIIKRAVRNVAEMPLEDFVFGHPAQVSLLGIQFQWTAETQMALSSAKVDKTIMNKNMKKVDALLRDMVNITVRLDLTKNQRTNLETCITVHMHQKESTEDLVKKKIKDPTDFEWLKQVRFYWRDDKDTVIISICDVDFEYSFEYLGVKERLVITPLTDICYITLSQALGMFLGGAPAGPAGTGKTETTKDLGNTLGKYVVVFNCSDQFDYTYMGKIYKGLAQSGLWGCFDEFNRINLDVLSVCAQQVYCICRTRERKKSFQFTDGTTVSLDPRVGFFITMNPGYAGAQELPENLKALFRGVTMMVPNRQIIMKVKLAAAGYQENDILSKKFFVLYGLCEQQLSKQAHYDFGLRNILSVLRTAGASKRQSPDKSEVFLMMRTVRDMNMSKFVAEDVPLFLSLIDDLFPGLKADATRPDVNKDAEKVVLERGLQVHPTWMNKCIQLYETYLVRHGIMLVGPSGSGKSAICECLAAALTELGTKHVIWRMNPKAITAPQMFGRRDDTTGDWTDGIFAVLWRRAAKNKNQNTWIVLDGPVDAIWIENLNTVLDDNKVLTLANGDRILMSAAMKAMFEPENLNNASPATVSRAGIIYVSDVELGWEPPVKSWLQKRDPTEACWARLFSKYIDRMLEFVRISLKPVMYNEQVSIVGTVMTLLNGYLKSMKEAGTAMNDAKYERVFLYCMTWSLGGLLEMKERPLFDQELRTFAHNMPPKEEDSDTIFEFLVNTTDAEWLHWRHCVPVWTYPKNEEKPQYAQLVIPTLDSVRYGALLNLSYNVDKATLLVGGPGTAKTNTINQFISKFNAETTANKTITFSSLTTPGIFQMSIEGAVEKRQGRTFGPPGGKQMCIFVDDISMPYINEWGHQVTNEIVRQLLEQGGMYSLEKPIGDMKFITDVRYVAAMNTPGGGKNDIPNRLKRQFAIFNVPLPSVAAINGIFGKLVEGRFSRDVFCEEVVYVASKLVPLTITLWNRIQTKMLPTPAKFHYLFNMRELSKVFQGVILATRDRFNLAAGDSAVFGGNVASPEGYLLGLWIHECRRVFSDKLISYEDKNWVDKAVFDLCRDNFSSDLVKQVEEPIYFVDFLREPAVMMRPVEIVTPHPSFYYSVPGGLPEVRARVEGLQRKFNEESKVMKLELVLFTDCVTHLMRITRLLAWPGLGLLVGVGGSGKQSLSRLSAYIAGPTFYITKTYNVSNLFEHIKGLYKIAGFKGQPVYFIFTDAEVKDEGFLEYINQILMTGEVAGLLTKEDQDMIVNDIRPVMKHQAPGILDTYDNLYNFFLNRVRDNLHVVLCFSPVGAKFARRAQQFPGLINGCTIDWFCPGPKKRLTSVSGKFIDKFTMACPKEVKNQLELLMGHAHVFVTAACKEYFEKYRRYVYVTPKSYLSFLQGYKELYAKKWSFTKELAYQIEVACQKMFEPKADVNKMKAELAVKNQTAVSAKEAEALLKQISESTAIAEKEKQKVAVIVDAVTKKASEIATVKDDAERDLAAAKPALDAALEALNSIKDGDIKNLKALKKPPQIITRIFDCVLVLRMLPVTKAEYTDEKGRMVQVGNYPEAQKMMNQMSFLQDLKDFAKEQINDETVELLEPYFMSEDFTFENAQKGSGNVAGLCNWAESMAKYHNVAKVVEPKIAKLREAEAELKLATKEKNAAEERMAKVQAKLDEMQAQFDAAMAHKQALEDDAAATQRKMDSANALIGALAGEEARWTAQSKEFDVQIQRLTGDCALASAFVSYLGPFNKEFRELLLNRDFYGDCMKLNVPVTPHLQITKFLVDDSEVGEWNLQGLPTDELSIQNGIMVTRASRYPVLVDPQGQGREWIKNREEANQLKTTQLNDKLFRNHLEECLAFGRPLLIENIEEELDPLLDPVLERRLVKKGKTWVVPLADKEVDFTETFRLFCTTRLPNPHFTPELSAKVTVVDFTVTMAGLEDQLLGKLISKEKKELEDQRQQLLEEVQSYKKRIKQLEDDLLCRLSNSQGNLLDEHQELIDVLAVTKQTAQDVSEKLANASETNKRINEACEEYRPVAHRATLLYFLIAEFSVVNCMYQTSLAQFNQLYELAIDRSEKANMPSKRIHNIIEYMTYEIYLYVQRGLFERHKIIFALMLTNKVLTSAGKVKATDLDVFLKGGAALDINSVRKKPKDWIPDLVWLNIIALSAMDAFRDIPDSVFRNDGLWRQWYDQEAPEMAKVPDYEDRLNKFERMCVVKTFREDRTLIAAADYIAEALGQRFVESVPLNMEKRPGRRAMAKCPLICLLSPGPDPTKLIEDLAKKKKIKTLGVSMGQGQEVIARKHMAAASLEGHWVLLQNTHLGLGYLTEVETFLVKEENVHEDFRLWITAEPHPQFPIGLLQMGIKITNEAPVGIKAGLRASYQWVNQDMLDMVSRQEWRQLLFVMCFLHSVVQEPQFGPIGWNVPYEFNQSDLSACVQFLQNHLSEMDAKKAPQPTWETVRYMISAIQYGSRITDDFDKLLMDTFAEKYFLQPVLQPSYELFKDTRSSDGFSYRVPDSTDIETFGSYIETLPGTESPEIFGLHPNADITFRTLQVQESIVTILDTMPKGAGSGSGLSREDVVDKICEDLLSKAPPLFDKEETKEKLKKLPGGPTLPLTVHLRQEIDRLNIVTRLTTTTLKNLALAIAGTIAAERGLIDALDALFNARIPQQWLSKSWEASTLGNWFTGLLQRYDQLNKWLNLGRPKAYWMTGFFNPQGFLTAMKQEVNRKHRDKWALDDVVMSSEVTHRPKDFESLKEGAPEGVYVYGLYLDLRLDGRENRLMDSDPKKLFNPLPVLHVDGVLAKDKKRSGLYEAPKPYRVKARKGLNFITTFSVRTEDDKSKWILPGVGILCSID.

Residues methionine 1 to glutamate 1780 are stem. 5 coiled-coil regions span residues isoleucine 449–lysine 469, valine 804–tyrosine 838, valine 1093–isoleucine 1114, aspartate 1275–leucine 1297, and lysine 1699–threonine 1727. 4 AAA regions span residues tyrosine 1781 to threonine 2002, lysine 2061 to lysine 2279, threonine 2384 to glycine 2638, and lysine 2763 to tyrosine 3013. ATP contacts are provided by residues glycine 1819–threonine 1826, glycine 2099–serine 2106, glycine 2425–threonine 2432, and glycine 2802–glutamine 2809. 4 coiled-coil regions span residues alanine 3077 to glutamine 3099, glutamate 3196 to glutamate 3227, lysine 3265 to glutamate 3343, and glutamate 3569 to arginine 3663. The interval alanine 3077 to glutamate 3343 is stalk. AAA stretches follow at residues leucine 3412–glutamate 3643 and alanine 3857–asparagine 4071.

It belongs to the dynein heavy chain family. In terms of assembly, consists of at least 3 heavy chains (alpha, beta and gamma), 2 intermediate chains and 8 light chains.

The protein resides in the cell projection. It localises to the cilium. Its subcellular location is the flagellum. The protein localises to the cytoplasm. It is found in the cytoskeleton. The protein resides in the flagellum axoneme. Force generating protein of eukaryotic cilia and flagella. Produces force towards the minus ends of microtubules. Dynein has ATPase activity; the force-producing power stroke is thought to occur on release of ADP. This chain is Dynein gamma chain, flagellar outer arm (ODA2), found in Chlamydomonas reinhardtii (Chlamydomonas smithii).